Here is a 420-residue protein sequence, read N- to C-terminus: Histidine--tRNA ligase (420 aa).

The protein belongs to the class-II aminoacyl-tRNA synthetase family. Homodimer.

It localises to the cytoplasm. It carries out the reaction tRNA(His) + L-histidine + ATP = L-histidyl-tRNA(His) + AMP + diphosphate + H(+). This is Histidine--tRNA ligase from Clostridioides difficile (strain 630) (Peptoclostridium difficile).